The sequence spans 437 residues: D-aminoacyl-tRNA deacylase (437 aa).

Belongs to the DtdA deacylase family. As to quaternary structure, monomer. It depends on Zn(2+) as a cofactor.

It catalyses the reaction a D-aminoacyl-tRNA + H2O = a tRNA + a D-alpha-amino acid + H(+). The enzyme catalyses glycyl-tRNA(Ala) + H2O = tRNA(Ala) + glycine + H(+). Functionally, D-aminoacyl-tRNA deacylase with broad substrate specificity. By recycling D-aminoacyl-tRNA to D-amino acids and free tRNA molecules, this enzyme counteracts the toxicity associated with the formation of D-aminoacyl-tRNA entities in vivo. This Methanoculleus marisnigri (strain ATCC 35101 / DSM 1498 / JR1) protein is D-aminoacyl-tRNA deacylase.